A 157-amino-acid polypeptide reads, in one-letter code: Endoribonuclease YbeY (157 aa).

Residues histidine 115, histidine 119, and histidine 125 each contribute to the Zn(2+) site.

It belongs to the endoribonuclease YbeY family. Zn(2+) serves as cofactor.

The protein localises to the cytoplasm. Functionally, single strand-specific metallo-endoribonuclease involved in late-stage 70S ribosome quality control and in maturation of the 3' terminus of the 16S rRNA. This Micrococcus luteus (strain ATCC 4698 / DSM 20030 / JCM 1464 / CCM 169 / CCUG 5858 / IAM 1056 / NBRC 3333 / NCIMB 9278 / NCTC 2665 / VKM Ac-2230) (Micrococcus lysodeikticus) protein is Endoribonuclease YbeY.